We begin with the raw amino-acid sequence, 215 residues long: Adenylate kinase (215 aa).

10-15 (GAGKGT) lines the ATP pocket. Residues 30 to 59 (STGDMFRAAMKNNTELGRKAKSFMDNGDLV) form an NMP region. Residues threonine 31, arginine 36, 57–59 (DLV), 85–88 (GFPR), and glutamine 92 contribute to the AMP site. Residues 126–163 (GRWICRTCGKTYHEIYNPPKVAGKCDLDGGELYQRDDD) form an LID region. Residue arginine 127 participates in ATP binding. The Zn(2+) site is built by cysteine 130 and cysteine 133. 136 to 137 (TY) is a binding site for ATP. Zn(2+)-binding residues include cysteine 150 and aspartate 153. Residues arginine 160 and arginine 171 each coordinate AMP. Glutamine 199 is a binding site for ATP.

This sequence belongs to the adenylate kinase family. In terms of assembly, monomer.

The protein resides in the cytoplasm. The catalysed reaction is AMP + ATP = 2 ADP. It functions in the pathway purine metabolism; AMP biosynthesis via salvage pathway; AMP from ADP: step 1/1. Its function is as follows. Catalyzes the reversible transfer of the terminal phosphate group between ATP and AMP. Plays an important role in cellular energy homeostasis and in adenine nucleotide metabolism. The sequence is that of Adenylate kinase from Listeria monocytogenes serotype 4a (strain HCC23).